The sequence spans 360 residues: POU domain, class 5, transcription factor 1 (360 aa).

2 disordered regions span residues 1 to 52 (MAGH…PGVG) and 88 to 114 (GGLE…SPEP). The 9aaTAD signature appears at 4–12 (HLASDFAFS). S111 is modified (phosphoserine; by MAPK). Residue K123 forms a Glycyl lysine isopeptide (Lys-Gly) (interchain with G-Cter in SUMO) linkage. The POU-specific domain occupies 138–212 (DIKALQKELE…LLQKWVEEAD (75 aa)). R157 and Q164 together coordinate DNA. DNA-binding stretches follow at residues 180–186 (SQTTICR) and 193–196 (SFKN). Positions 230–289 (RKRKRTSIENRVRGNLENLFLQCPKPTLQQISHIAQQLGLEKDVVRVWFCNRRQKGKRSS) form a DNA-binding region, homeobox. T235 carries the post-translational modification Phosphothreonine. Phosphoserine occurs at positions 236, 289, 290, and 355.

The protein belongs to the POU transcription factor family. Class-5 subfamily. As to quaternary structure, interacts with PKM. Interacts with WWP2. Interacts with UBE2I and ZSCAN10. Interacts with PCGF1. Interacts with ESRRB; recruits ESRRB near the POU5F1-SOX2 element in the NANOG proximal promoter; the interaction is DNA independent. Interacts with ZNF322. Interacts with MAPK8 and MAPK9; the interaction allows MAPK8 and MAPK9 to phosphorylate POU5F1 on Ser-355. Interacts (when phosphorylated on Ser-355) with FBXW8. Interacts with FBXW4. Interacts with SOX2 and SOX15; binds synergistically with either SOX2 or SOX15 to DNA. Interacts with DDX56. Post-translationally, sumoylation enhances the protein stability, DNA binding and transactivation activity. Sumoylation is required for enhanced YES1 expression. Ubiquitinated; undergoes 'Lys-63'-linked polyubiquitination by WWP2 leading to proteasomal degradation. In terms of processing, ERK1/2-mediated phosphorylation at Ser-111 promotes nuclear exclusion and proteasomal degradation. Phosphorylation at Thr-235 and Ser-236 decrease DNA-binding and alters ability to activate transcription. As to expression, expressed in developing brain. Highest levels found in specific cell layers of the cortex, the olfactory bulb, the hippocampus and the cerebellum. Low levels of expression in adult tissues.

The protein localises to the cytoplasm. The protein resides in the nucleus. Functionally, transcription factor that binds to the octamer motif (5'-ATTTGCAT-3'). Forms a trimeric complex with SOX2 or SOX15 on DNA and controls the expression of a number of genes involved in embryonic development such as YES1, FGF4, UTF1 and ZFP206. Critical for early embryogenesis and for embryonic stem cell pluripotency. The polypeptide is POU domain, class 5, transcription factor 1 (POU5F1) (Homo sapiens (Human)).